We begin with the raw amino-acid sequence, 576 residues long: Malonate--CoA ligase ACSF3, mitochondrial (576 aa).

The N-terminal 83 residues, 1-83, are a transit peptide targeting the mitochondrion; the sequence is MLPHVVLTFR…RSLRLSQEIC (83 aa). Residues 202–210, D457, R471, and K563 each bind ATP; that span reads TSGTTGRPK.

It belongs to the ATP-dependent AMP-binding enzyme family.

It localises to the mitochondrion. The catalysed reaction is tetracosanoate + ATP + CoA = tetracosanoyl-CoA + AMP + diphosphate. It carries out the reaction malonate + ATP + CoA = malonyl-CoA + AMP + diphosphate. Catalyzes the initial reaction in intramitochondrial fatty acid synthesis, by activating malonate and methylmalonate, but not acetate, into their respective CoA thioester. May have some preference toward very-long-chain substrates. This chain is Malonate--CoA ligase ACSF3, mitochondrial, found in Homo sapiens (Human).